A 61-amino-acid polypeptide reads, in one-letter code: MAVPKKKTSKSRKNMRRAHDFLTAPSLSVCPQCKSPKMPHRACPSCGTYKGKEVAGAAKQA.

Basic residues predominate over residues 1–16 (MAVPKKKTSKSRKNMR). Residues 1–20 (MAVPKKKTSKSRKNMRRAHD) are disordered.

Belongs to the bacterial ribosomal protein bL32 family.

The polypeptide is Large ribosomal subunit protein bL32 (Trichlorobacter lovleyi (strain ATCC BAA-1151 / DSM 17278 / SZ) (Geobacter lovleyi)).